The sequence spans 256 residues: MAPKKGVKVASKKKPEKVTNPLFERRPKQFGIGGALPPKKDLSRYIKWPKSIRLQRQKRILKQRLKVPPALNQFTKTLDKNLATSLFKILLKYRPEDKAAKKERLLNKAQAEAEGKPAESKKPIVVKYGLNHVTYLIEQNKAQLVVIAHDVDPIELVVWLPALCRKMEVPYCIVKGKSRLGAVVHQKTAAALCLTTVKNEDKLEFSKILEAIKANFNDKYEEYRKKWGGGIMGSKSQAKTKAKERVIAKEAAQRMN.

Positions 1–15 are enriched in basic residues; that stretch reads MAPKKGVKVASKKKP. Residues 1-20 are disordered; that stretch reads MAPKKGVKVASKKKPEKVTN.

The protein belongs to the eukaryotic ribosomal protein eL8 family.

This chain is Large ribosomal subunit protein eL8y (RPL7AB), found in Arabidopsis thaliana (Mouse-ear cress).